Reading from the N-terminus, the 149-residue chain is Large ribosomal subunit protein uL13 (149 aa).

It belongs to the universal ribosomal protein uL13 family. Part of the 50S ribosomal subunit.

In terms of biological role, this protein is one of the early assembly proteins of the 50S ribosomal subunit, although it is not seen to bind rRNA by itself. It is important during the early stages of 50S assembly. This is Large ribosomal subunit protein uL13 from Borrelia recurrentis (strain A1).